The sequence spans 242 residues: Small ribosomal subunit protein eS4 (242 aa).

The 64-residue stretch at 43–106 (LPLMIIVRDI…GDVYRVLPDE (64 aa)) folds into the S4 RNA-binding domain.

Belongs to the eukaryotic ribosomal protein eS4 family.

The protein is Small ribosomal subunit protein eS4 (rps4e) of Methanothermobacter thermautotrophicus (strain ATCC 29096 / DSM 1053 / JCM 10044 / NBRC 100330 / Delta H) (Methanobacterium thermoautotrophicum).